We begin with the raw amino-acid sequence, 148 residues long: MKLDVQILDARLHEQLPQYATPGSAGLDLRACLDAPLTLEPGSTHLIPTGMAIHLADPGYAALILPRSGMGHKHGIVLGNLVGLIDSDYQGQLMISTWNRGDTAFVLNPMERLAQLVIVPVVQAELNIVDAFAESERGAGGFGSTGRH.

Residues 67-69, asparagine 80, 84-86, and methionine 94 contribute to the substrate site; these read RSG and LID.

Belongs to the dUTPase family. It depends on Mg(2+) as a cofactor.

It carries out the reaction dUTP + H2O = dUMP + diphosphate + H(+). It participates in pyrimidine metabolism; dUMP biosynthesis; dUMP from dCTP (dUTP route): step 2/2. This enzyme is involved in nucleotide metabolism: it produces dUMP, the immediate precursor of thymidine nucleotides and it decreases the intracellular concentration of dUTP so that uracil cannot be incorporated into DNA. The polypeptide is Deoxyuridine 5'-triphosphate nucleotidohydrolase (Ralstonia nicotianae (strain ATCC BAA-1114 / GMI1000) (Ralstonia solanacearum)).